Reading from the N-terminus, the 98-residue chain is MKAIVKRRVEDKLYQNRYLVDPGRPHISVRKHLFPTPNLIALTQVCPAKCYQLNDRRQVIIVSDGCLECGTCNVLCGPDGDIEWTYPRGGFGVLFKFG.

This sequence to ferredoxins from P.putida and C.tartarivorum, ferredoxin I from A.vinelandii, ferredoxin II from D.desulfuricans.

Functionally, could be a 3Fe-4S cluster-containing protein. The chain is Ferredoxin-like protein (fixX) from Rhizobium leguminosarum bv. trifolii.